The primary structure comprises 299 residues: Protease HtpX homolog (299 aa).

The next 2 helical transmembrane spans lie at 14-34 (WLLL…VGNL) and 39-59 (GFGG…TMIF). Position 143 (H143) interacts with Zn(2+). E144 is an active-site residue. H147 contributes to the Zn(2+) binding site. The next 2 membrane-spanning stretches (helical) occupy residues 153–173 (IRIS…AGMA) and 198–218 (IVFL…ATLV). E227 serves as a coordination point for Zn(2+).

This sequence belongs to the peptidase M48B family. Zn(2+) is required as a cofactor.

Its subcellular location is the cell membrane. The protein is Protease HtpX homolog of Streptococcus thermophilus (strain ATCC BAA-250 / LMG 18311).